Consider the following 343-residue polypeptide: Aspartate carbamoyltransferase catalytic subunit (343 aa).

Carbamoyl phosphate is bound by residues Arg-91 and Thr-92. Lys-119 is a binding site for L-aspartate. Residues Arg-141, His-171, and Gln-174 each coordinate carbamoyl phosphate. 2 residues coordinate L-aspartate: Arg-204 and Arg-259. The carbamoyl phosphate site is built by Gly-300 and Pro-301.

The protein belongs to the aspartate/ornithine carbamoyltransferase superfamily. ATCase family. In terms of assembly, heterododecamer (2C3:3R2) of six catalytic PyrB chains organized as two trimers (C3), and six regulatory PyrI chains organized as three dimers (R2).

The enzyme catalyses carbamoyl phosphate + L-aspartate = N-carbamoyl-L-aspartate + phosphate + H(+). It participates in pyrimidine metabolism; UMP biosynthesis via de novo pathway; (S)-dihydroorotate from bicarbonate: step 2/3. In terms of biological role, catalyzes the condensation of carbamoyl phosphate and aspartate to form carbamoyl aspartate and inorganic phosphate, the committed step in the de novo pyrimidine nucleotide biosynthesis pathway. The chain is Aspartate carbamoyltransferase catalytic subunit from Burkholderia orbicola (strain MC0-3).